Here is a 456-residue protein sequence, read N- to C-terminus: tRNA-2-methylthio-N(6)-dimethylallyladenosine synthase (456 aa).

Positions Glu-18 to Val-136 constitute an MTTase N-terminal domain. Residues Cys-27, Cys-63, Cys-97, Cys-173, Cys-177, and Cys-180 each contribute to the [4Fe-4S] cluster site. The region spanning Arg-159–Asn-391 is the Radical SAM core domain. Positions Lys-392–Glu-455 constitute a TRAM domain.

Belongs to the methylthiotransferase family. MiaB subfamily. As to quaternary structure, monomer. [4Fe-4S] cluster serves as cofactor.

The protein resides in the cytoplasm. The catalysed reaction is N(6)-dimethylallyladenosine(37) in tRNA + (sulfur carrier)-SH + AH2 + 2 S-adenosyl-L-methionine = 2-methylsulfanyl-N(6)-dimethylallyladenosine(37) in tRNA + (sulfur carrier)-H + 5'-deoxyadenosine + L-methionine + A + S-adenosyl-L-homocysteine + 2 H(+). Its function is as follows. Catalyzes the methylthiolation of N6-(dimethylallyl)adenosine (i(6)A), leading to the formation of 2-methylthio-N6-(dimethylallyl)adenosine (ms(2)i(6)A) at position 37 in tRNAs that read codons beginning with uridine. This Clostridium botulinum (strain Alaska E43 / Type E3) protein is tRNA-2-methylthio-N(6)-dimethylallyladenosine synthase.